The primary structure comprises 339 residues: Dihydroorotate dehydrogenase (quinone) (339 aa).

Residues 62–66 and threonine 86 contribute to the FMN site; that span reads AGMDK. A substrate-binding site is contributed by lysine 66. 111–115 lines the substrate pocket; sequence NRMGF. Positions 139 and 172 each coordinate FMN. Substrate is bound at residue asparagine 172. Serine 175 (nucleophile) is an active-site residue. Position 177 (asparagine 177) interacts with substrate. FMN contacts are provided by lysine 217 and threonine 245. 246–247 contacts substrate; the sequence is NT. Residues glycine 268, glycine 297, and 318–319 contribute to the FMN site; that span reads YS.

Belongs to the dihydroorotate dehydrogenase family. Type 2 subfamily. In terms of assembly, monomer. It depends on FMN as a cofactor.

The protein localises to the cell membrane. The enzyme catalyses (S)-dihydroorotate + a quinone = orotate + a quinol. It participates in pyrimidine metabolism; UMP biosynthesis via de novo pathway; orotate from (S)-dihydroorotate (quinone route): step 1/1. In terms of biological role, catalyzes the conversion of dihydroorotate to orotate with quinone as electron acceptor. The polypeptide is Dihydroorotate dehydrogenase (quinone) (Shewanella sediminis (strain HAW-EB3)).